The following is a 928-amino-acid chain: Chitin synthase 2 (928 aa).

Disordered regions lie at residues 1–45 (MAYN…EAYA) and 110–179 (AYYT…SPAP). Over residues 17-28 (PSAQPQYDSRSP) the composition is skewed to polar residues. Residues 130–140 (PSHDEPYRPDT) are compositionally biased toward basic and acidic residues. The next 9 helical transmembrane spans lie at 472 to 492 (SAFGFISVLPGAFCAYRYVAL), 570 to 589 (WLNGSFFAAVYAVAHVYQLW), 613 to 633 (LFAWFAIGNFFLVFRLLTASL), 644 to 664 (TVLGVVFEFVYLGTLLYCFIL), 678 to 698 (MMMVIFWSVLMVWLTFASIFL), 723 to 743 (FFGLIVSLASTYVLWFVASFL), 753 to 773 (CFLQYIVLTPTYINVLNIYAF), 854 to 874 (VTAWMITNFILVAAVLNIAGF), and 893 to 913 (VILWSVAGLSLFRFTGACWFL).

Belongs to the chitin synthase family. Class I subfamily.

It is found in the cell membrane. It catalyses the reaction [(1-&gt;4)-N-acetyl-beta-D-glucosaminyl](n) + UDP-N-acetyl-alpha-D-glucosamine = [(1-&gt;4)-N-acetyl-beta-D-glucosaminyl](n+1) + UDP + H(+). Its function is as follows. Polymerizes chitin, a structural polymer of the cell wall and septum, by transferring the sugar moiety of UDP-GlcNAc to the non-reducing end of the growing chitin polymer. CHS2 plays a synergistic role to CHS1 in normal yeast cell reproductive growth, even if this role is less predominant than for CHS1. With CHS3, plays an important role in virulence. The polypeptide is Chitin synthase 2 (Exophiala dermatitidis (Black yeast-like fungus)).